Consider the following 246-residue polypeptide: Eukaryotic translation initiation factor 6 (246 aa).

2 positions are modified to phosphoserine; by CK1: Ser-174 and Ser-175.

This sequence belongs to the eIF-6 family. In terms of assembly, monomer. Associates with the 60S ribosomal subunit. Post-translationally, phosphorylation at Ser-174 and Ser-175 promotes nuclear export.

It localises to the cytoplasm. It is found in the nucleus. The protein localises to the nucleolus. In terms of biological role, binds to the 60S ribosomal subunit and prevents its association with the 40S ribosomal subunit to form the 80S initiation complex in the cytoplasm. Is also involved in ribosome biogenesis. Associates with pre-60S subunits in the nucleus and is involved in its nuclear export. The chain is Eukaryotic translation initiation factor 6 from Sordaria macrospora (strain ATCC MYA-333 / DSM 997 / K(L3346) / K-hell).